The primary structure comprises 395 residues: Chaperone protein DnaJ (395 aa).

One can recognise a J domain in the interval 4–69 (DYYEVLGVGR…DKRRRYDQFG (66 aa)). A CR-type zinc finger spans residues 152-233 (GVEKTLKIKK…CHGEGIKQGE (82 aa)). Zn(2+) contacts are provided by Cys165, Cys168, Cys181, Cys184, Cys207, Cys210, Cys221, and Cys224. 4 CXXCXGXG motif repeats span residues 165-172 (CDVCNGTG), 181-188 (CPTCQGTG), 207-214 (CPTCGGEG), and 221-228 (CTACHGEG).

This sequence belongs to the DnaJ family. Homodimer. Zn(2+) serves as cofactor.

It localises to the cytoplasm. Participates actively in the response to hyperosmotic and heat shock by preventing the aggregation of stress-denatured proteins and by disaggregating proteins, also in an autonomous, DnaK-independent fashion. Unfolded proteins bind initially to DnaJ; upon interaction with the DnaJ-bound protein, DnaK hydrolyzes its bound ATP, resulting in the formation of a stable complex. GrpE releases ADP from DnaK; ATP binding to DnaK triggers the release of the substrate protein, thus completing the reaction cycle. Several rounds of ATP-dependent interactions between DnaJ, DnaK and GrpE are required for fully efficient folding. Also involved, together with DnaK and GrpE, in the DNA replication of plasmids through activation of initiation proteins. The chain is Chaperone protein DnaJ from Prosthecochloris aestuarii (strain DSM 271 / SK 413).